A 95-amino-acid chain; its full sequence is Large ribosomal subunit protein eL37z (95 aa).

Zn(2+) is bound by residues Cys-19, Cys-22, Cys-34, and Cys-37. The C4-type zinc finger occupies 19-37 (CVRCGRRSFHIQKSRCSAC).

Belongs to the eukaryotic ribosomal protein eL37 family. The cofactor is Zn(2+).

Binds to the 23S rRNA. This chain is Large ribosomal subunit protein eL37z (RPL37A), found in Arabidopsis thaliana (Mouse-ear cress).